The following is a 944-amino-acid chain: Protein translocase subunit SecA (944 aa).

ATP is bound by residues Gln87, 105-109, and Asp494; that span reads GEGKT. The disordered stretch occupies residues 894-944; the sequence is HAAAAGDGEEKPRPKQETVVRTQPKVGRNDPCPCGSGKKYKKCHGATEAAV. Residues 901–911 are compositionally biased toward basic and acidic residues; sequence GEEKPRPKQET. Residues Cys925, Cys927, Cys936, and His937 each contribute to the Zn(2+) site.

It belongs to the SecA family. As to quaternary structure, monomer and homodimer. Part of the essential Sec protein translocation apparatus which comprises SecA, SecYEG and auxiliary proteins SecDF-YajC and YidC. Zn(2+) is required as a cofactor.

The protein resides in the cell inner membrane. It is found in the cytoplasm. It carries out the reaction ATP + H2O + cellular proteinSide 1 = ADP + phosphate + cellular proteinSide 2.. Its function is as follows. Part of the Sec protein translocase complex. Interacts with the SecYEG preprotein conducting channel. Has a central role in coupling the hydrolysis of ATP to the transfer of proteins into and across the cell membrane, serving as an ATP-driven molecular motor driving the stepwise translocation of polypeptide chains across the membrane. The polypeptide is Protein translocase subunit SecA (Anaeromyxobacter sp. (strain Fw109-5)).